The primary structure comprises 75 residues: Small ribosomal subunit protein bS18 (75 aa).

The protein belongs to the bacterial ribosomal protein bS18 family. In terms of assembly, part of the 30S ribosomal subunit. Forms a tight heterodimer with protein bS6.

Functionally, binds as a heterodimer with protein bS6 to the central domain of the 16S rRNA, where it helps stabilize the platform of the 30S subunit. In Photobacterium profundum (strain SS9), this protein is Small ribosomal subunit protein bS18.